Here is a 547-residue protein sequence, read N- to C-terminus: Chaperonin GroEL (547 aa).

ATP is bound by residues 30-33 (TLGP), lysine 51, 87-91 (DGTTT), glycine 415, 479-481 (NAA), and aspartate 495.

Belongs to the chaperonin (HSP60) family. In terms of assembly, forms a cylinder of 14 subunits composed of two heptameric rings stacked back-to-back. Interacts with the co-chaperonin GroES.

It is found in the cytoplasm. It catalyses the reaction ATP + H2O + a folded polypeptide = ADP + phosphate + an unfolded polypeptide.. Functionally, together with its co-chaperonin GroES, plays an essential role in assisting protein folding. The GroEL-GroES system forms a nano-cage that allows encapsulation of the non-native substrate proteins and provides a physical environment optimized to promote and accelerate protein folding. This is Chaperonin GroEL from Cupriavidus necator (strain ATCC 17699 / DSM 428 / KCTC 22496 / NCIMB 10442 / H16 / Stanier 337) (Ralstonia eutropha).